The primary structure comprises 297 residues: Thiosulfate sulfurtransferase (297 aa).

Lysine 14 carries the N6-acetyllysine; alternate modification. Lysine 14 is modified (N6-succinyllysine; alternate). In terms of domain architecture, Rhodanese 1 spans 25–143 (VGPGLRVLDA…WLKEGHPVTS (119 aa)). O-linked (GlcNAc) serine glycosylation occurs at serine 35. A Phosphoserine modification is found at serine 38. An N6-acetyllysine; alternate modification is found at lysine 136. Lysine 136 is subject to N6-succinyllysine; alternate. Residues 144–159 (EPSRPEPAIFKATLNR) are hinge. At lysine 163 the chain carries N6-acetyllysine. Residues 173 to 288 (ESKRFQLVDS…WFHRAPPETW (116 aa)) form the Rhodanese 2 domain. Position 175 is an N6-acetyllysine; alternate (lysine 175). N6-succinyllysine; alternate is present on lysine 175. Position 187 (arginine 187) interacts with substrate. N6-acetyllysine; alternate is present on lysine 224. Lysine 224 is modified (N6-succinyllysine; alternate). N6-acetyllysine is present on lysine 236. Residue lysine 237 is modified to N6-acetyllysine; alternate. An N6-succinyllysine; alternate modification is found at lysine 237. Catalysis depends on cysteine 248, which acts as the Cysteine persulfide intermediate. Lysine 250 is a binding site for substrate.

In terms of assembly, monomer. As to expression, expressed in numerous tissues.

Its subcellular location is the mitochondrion matrix. It catalyses the reaction thiosulfate + hydrogen cyanide = thiocyanate + sulfite + 2 H(+). In terms of biological role, together with MRPL18, acts as a mitochondrial import factor for the cytosolic 5S rRNA. Only the nascent unfolded cytoplasmic form is able to bind to the 5S rRNA. Formation of iron-sulfur complexes and cyanide detoxification. Binds molecular oxygen and sulfur. The chain is Thiosulfate sulfurtransferase (TST) from Bos taurus (Bovine).